The following is a 309-amino-acid chain: Oxidoreductase NAD-binding domain-containing protein 1 (309 aa).

An N-terminal signal peptide occupies residues 1–14; that stretch reads MVVVIPRLLRGSLG. Residues 47-161 form the FAD-binding FR-type domain; it reads HLERTADVVR…VGGEFFFDPK (115 aa). 175–180 lines the NAD(+) pocket; the sequence is GVGINP.

The protein is Oxidoreductase NAD-binding domain-containing protein 1 (OXNAD1) of Bos taurus (Bovine).